The sequence spans 39 residues: Photosystem II reaction center protein L (39 aa).

The chain crosses the membrane as a helical span at residues 18–38 (SLYLGLLSVLVLGILFSSYFF).

The protein belongs to the PsbL family. In terms of assembly, PSII is composed of 1 copy each of membrane proteins PsbA, PsbB, PsbC, PsbD, PsbE, PsbF, PsbH, PsbI, PsbJ, PsbK, PsbL, PsbM, PsbT, PsbX, PsbY, Psb30/Ycf12, peripheral proteins PsbO, CyanoQ (PsbQ), PsbU, PsbV and a large number of cofactors. It forms dimeric complexes.

Its subcellular location is the cellular thylakoid membrane. In terms of biological role, one of the components of the core complex of photosystem II (PSII). PSII is a light-driven water:plastoquinone oxidoreductase that uses light energy to abstract electrons from H(2)O, generating O(2) and a proton gradient subsequently used for ATP formation. It consists of a core antenna complex that captures photons, and an electron transfer chain that converts photonic excitation into a charge separation. This subunit is found at the monomer-monomer interface and is required for correct PSII assembly and/or dimerization. The sequence is that of Photosystem II reaction center protein L from Prochlorococcus marinus subsp. pastoris (strain CCMP1986 / NIES-2087 / MED4).